Consider the following 138-residue polypeptide: Basic phospholipase A2 vaspin B chain (138 aa).

The signal sequence occupies residues 1 to 16; the sequence is MRILWIVAVCLIGVEG. Intrachain disulfides connect Cys42–Cys131, Cys44–Cys60, Cys59–Cys111, Cys65–Cys138, Cys66–Cys104, Cys73–Cys97, and Cys91–Cys102. Residues Tyr43, Gly45, and Gly47 each contribute to the Ca(2+) site. The active site involves His63. Asp64 contacts Ca(2+). The active site involves Asp105.

This sequence belongs to the phospholipase A2 family. Group II subfamily. D49 sub-subfamily. In terms of assembly, heterodimer of a weakly toxic basic protein having phospholipase A2 activity (B chain (AC Q8JFG1)) and a non-toxic acidic protein functioning as its inhibitor (A chain). Ca(2+) serves as cofactor. As to expression, expressed by the venom gland.

The protein localises to the secreted. It carries out the reaction a 1,2-diacyl-sn-glycero-3-phosphocholine + H2O = a 1-acyl-sn-glycero-3-phosphocholine + a fatty acid + H(+). Its function is as follows. Heterodimer: postsynaptic neurotoxin. Monomer: snake venom phospholipase A2 (PLA2) that shows postsynaptic neurotoxicity. PLA2 catalyzes the calcium-dependent hydrolysis of the 2-acyl groups in 3-sn-phosphoglycerides. This Vipera aspis aspis (Aspic viper) protein is Basic phospholipase A2 vaspin B chain.